Here is a 467-residue protein sequence, read N- to C-terminus: Fumarate hydratase class II (467 aa).

Residues Ser-98–Thr-100, Arg-126, His-129–Asp-132, Ser-139–Asn-141, and Thr-187 each bind substrate. His-188 functions as the Proton donor/acceptor in the catalytic mechanism. The active site involves Ser-318. Substrate contacts are provided by residues Ser-319 and Lys-324–Asn-326.

Belongs to the class-II fumarase/aspartase family. Fumarase subfamily. As to quaternary structure, homotetramer.

The protein localises to the cytoplasm. The catalysed reaction is (S)-malate = fumarate + H2O. It participates in carbohydrate metabolism; tricarboxylic acid cycle; (S)-malate from fumarate: step 1/1. Involved in the TCA cycle. Catalyzes the stereospecific interconversion of fumarate to L-malate. In Shigella flexneri, this protein is Fumarate hydratase class II.